We begin with the raw amino-acid sequence, 1934 residues long: Myosin-7 (1934 aa).

Positions 31–80 (DLKKDVFVPDDKEEFVKAKIVSREGGKVTAETENGKTVTVKEDQVMQQNP) constitute a Myosin N-terminal SH3-like domain. The Myosin motor domain occupies 84 to 777 (DKIEDMAMLT…LLGLLEEMRD (694 aa)). Lys-128 is subject to N6,N6,N6-trimethyllysine. Residue 177–184 (GESGAGKT) coordinates ATP. The residue at position 377 (Thr-377) is a Phosphothreonine. Actin-binding regions lie at residues 654–676 (LNKL…IPNE) and 756–770 (KFGH…GLLG). Residues 780–809 (LSRIITRIQAQSRGLLSRMEFKKLLERRDS) enclose the IQ domain. Positions 839 to 1934 (LKSAETEKEM…DIGAKGLNEE (1096 aa)) form a coiled coil. Ser-1136 and Ser-1268 each carry phosphoserine. Residue Thr-1281 is modified to Phosphothreonine. Phosphotyrosine is present on Tyr-1307. The residue at position 1308 (Thr-1308) is a Phosphothreonine. Ser-1509 carries the phosphoserine modification. Thr-1512 is subject to Phosphothreonine. The segment at 1914 to 1934 (SQVNKLRAKSRDIGAKGLNEE) is disordered. A compositionally biased stretch (basic and acidic residues) spans 1922–1934 (KSRDIGAKGLNEE).

Belongs to the TRAFAC class myosin-kinesin ATPase superfamily. Myosin family. Muscle myosin is a hexameric protein that consists of 2 heavy chain subunits (MHC), 2 alkali light chain subunits (MLC) and 2 regulatory light chain subunits (MLC-2). Interacts with ECPAS. Interacts (via C-terminus) with LRRC39.

It localises to the cytoplasm. The protein localises to the myofibril. The protein resides in the sarcomere. Functionally, myosins are actin-based motor molecules with ATPase activity essential for muscle contraction. Forms regular bipolar thick filaments that, together with actin thin filaments, constitute the fundamental contractile unit of skeletal and cardiac muscle. The chain is Myosin-7 (MYH7) from Mesocricetus auratus (Golden hamster).